A 159-amino-acid chain; its full sequence is Transcriptional repressor NrdR (159 aa).

The segment at 3 to 34 (CPFCRHEDTQVVDSRVSEDGAAIRRRRRCSAC) is a zinc-finger region. In terms of domain architecture, ATP-cone spans 49–139 (PAVVKKDGSR…VYRRFEDVSE (91 aa)).

Belongs to the NrdR family. Zn(2+) serves as cofactor.

In terms of biological role, negatively regulates transcription of bacterial ribonucleotide reductase nrd genes and operons by binding to NrdR-boxes. This chain is Transcriptional repressor NrdR, found in Burkholderia vietnamiensis (strain G4 / LMG 22486) (Burkholderia cepacia (strain R1808)).